We begin with the raw amino-acid sequence, 752 residues long: Photosystem I P700 chlorophyll a apoprotein A1 (752 aa).

A run of 8 helical transmembrane segments spans residues 73 to 96 (IFSAHFGQLAIIFLWVSQAYFHGA), 159 to 182 (LYWTAMGGLMMSALMVFAGWFHYH), 198 to 222 (MNHHLAGLLGLGCLSWSGHQIHISL), 294 to 312 (TAHHHLALAVLFIFAGHMY), 349 to 372 (WHAQLAINLAMMGSLSIIVAHHMY), 388 to 414 (LSLFTHHMWIGGFCVCGAAAHGAIFMV), 436 to 458 (AIISHLNWVCIFLGTHSFGLYIH), and 533 to 551 (FLVHHIHAFTIHVTVLILL). Residues Cys-575 and Cys-584 each coordinate [4Fe-4S] cluster. The next 2 helical transmembrane spans lie at 591–612 (HIFLGLFWMYNCISVVIFHFSW) and 666–688 (LSAYGIIFLGAHFIWAFSLMFLF). Position 677 (His-677) interacts with chlorophyll a'. Positions 685 and 693 each coordinate chlorophyll a. Trp-694 provides a ligand contact to phylloquinone. A helical transmembrane segment spans residues 726–746 (AVGLAHYLLGGIGTTWSFFLA).

The protein belongs to the PsaA/PsaB family. The PsaA/B heterodimer binds the P700 chlorophyll special pair and subsequent electron acceptors. PSI consists of a core antenna complex that captures photons, and an electron transfer chain that converts photonic excitation into a charge separation. The eukaryotic PSI reaction center is composed of at least 11 subunits. It depends on P700 is a chlorophyll a/chlorophyll a' dimer, A0 is one or more chlorophyll a, A1 is one or both phylloquinones and FX is a shared 4Fe-4S iron-sulfur center. as a cofactor.

It localises to the plastid. It is found in the chloroplast thylakoid membrane. The enzyme catalyses reduced [plastocyanin] + hnu + oxidized [2Fe-2S]-[ferredoxin] = oxidized [plastocyanin] + reduced [2Fe-2S]-[ferredoxin]. Its function is as follows. PsaA and PsaB bind P700, the primary electron donor of photosystem I (PSI), as well as the electron acceptors A0, A1 and FX. PSI is a plastocyanin/cytochrome c6-ferredoxin oxidoreductase, converting photonic excitation into a charge separation, which transfers an electron from the donor P700 chlorophyll pair to the spectroscopically characterized acceptors A0, A1, FX, FA and FB in turn. Oxidized P700 is reduced on the lumenal side of the thylakoid membrane by plastocyanin or cytochrome c6. The chain is Photosystem I P700 chlorophyll a apoprotein A1 from Emiliania huxleyi (Coccolithophore).